Here is a 202-residue protein sequence, read N- to C-terminus: Prostamide/prostaglandin F synthase (202 aa).

Tyr-108 carries the post-translational modification Phosphotyrosine.

Belongs to the peroxiredoxin-like PRXL2 family. Prostamide/prostaglandin F synthase subfamily.

Its subcellular location is the cytoplasm. The protein localises to the cytosol. The catalysed reaction is prostaglandin H2 + [thioredoxin]-dithiol = prostaglandin F2alpha + [thioredoxin]-disulfide. The enzyme catalyses prostamide F2alpha + [thioredoxin]-disulfide = prostamide H2 + [thioredoxin]-dithiol. Its function is as follows. Catalyzes the reduction of prostaglandin-ethanolamide H(2) (prostamide H(2)) to prostamide F(2alpha) with NADPH as proton donor. Also able to reduce prostaglandin H(2) to prostaglandin F(2alpha). The sequence is that of Prostamide/prostaglandin F synthase (PRXL2B) from Sus scrofa (Pig).